Consider the following 319-residue polypeptide: Lipoyl synthase (319 aa).

C61, C66, C72, C87, C91, C94, and S300 together coordinate [4Fe-4S] cluster. The Radical SAM core domain occupies W73–L289.

Belongs to the radical SAM superfamily. Lipoyl synthase family. It depends on [4Fe-4S] cluster as a cofactor.

The protein localises to the cytoplasm. It carries out the reaction [[Fe-S] cluster scaffold protein carrying a second [4Fe-4S](2+) cluster] + N(6)-octanoyl-L-lysyl-[protein] + 2 oxidized [2Fe-2S]-[ferredoxin] + 2 S-adenosyl-L-methionine + 4 H(+) = [[Fe-S] cluster scaffold protein] + N(6)-[(R)-dihydrolipoyl]-L-lysyl-[protein] + 4 Fe(3+) + 2 hydrogen sulfide + 2 5'-deoxyadenosine + 2 L-methionine + 2 reduced [2Fe-2S]-[ferredoxin]. The protein operates within protein modification; protein lipoylation via endogenous pathway; protein N(6)-(lipoyl)lysine from octanoyl-[acyl-carrier-protein]: step 2/2. Functionally, catalyzes the radical-mediated insertion of two sulfur atoms into the C-6 and C-8 positions of the octanoyl moiety bound to the lipoyl domains of lipoate-dependent enzymes, thereby converting the octanoylated domains into lipoylated derivatives. This Rhodopseudomonas palustris (strain BisB18) protein is Lipoyl synthase.